The sequence spans 136 residues: Large ribosomal subunit protein uL16 (136 aa).

This sequence belongs to the universal ribosomal protein uL16 family. As to quaternary structure, part of the 50S ribosomal subunit.

In terms of biological role, binds 23S rRNA and is also seen to make contacts with the A and possibly P site tRNAs. The sequence is that of Large ribosomal subunit protein uL16 from Actinobacillus pleuropneumoniae serotype 5b (strain L20).